The following is a 118-amino-acid chain: Large ribosomal subunit protein bL20 (118 aa).

It belongs to the bacterial ribosomal protein bL20 family.

Its function is as follows. Binds directly to 23S ribosomal RNA and is necessary for the in vitro assembly process of the 50S ribosomal subunit. It is not involved in the protein synthesizing functions of that subunit. The protein is Large ribosomal subunit protein bL20 of Shigella dysenteriae serotype 1 (strain Sd197).